Consider the following 77-residue polypeptide: Short neurotoxin OH-32 (77 aa).

The signal sequence occupies residues 1–21; sequence MKNLLLTFLVVTIVCLDLGYT. Intrachain disulfides connect cysteine 24–cysteine 40, cysteine 33–cysteine 58, cysteine 62–cysteine 70, and cysteine 71–cysteine 76.

Belongs to the three-finger toxin family. Short-chain subfamily. In terms of tissue distribution, expressed by the venom gland.

It localises to the secreted. Its function is as follows. This three-finger toxin binds and inhibits the nicotinic acetylcholine receptor (nAChR). This is Short neurotoxin OH-32 from Ophiophagus hannah (King cobra).